The sequence spans 390 residues: Succinate--CoA ligase [ADP-forming] subunit beta (390 aa).

An ATP-grasp domain is found at 9-248 (KDILRKFGVT…TSEEDPFEVE (240 aa)). ATP-binding positions include Lys-50, 57–59 (GRG), Glu-103, Met-106, and Glu-111. Residues Asn-203 and Asp-217 each contribute to the Mg(2+) site. Substrate is bound by residues Asn-268 and 325-327 (GIV).

The protein belongs to the succinate/malate CoA ligase beta subunit family. As to quaternary structure, heterotetramer of two alpha and two beta subunits. Mg(2+) serves as cofactor.

It catalyses the reaction succinate + ATP + CoA = succinyl-CoA + ADP + phosphate. The enzyme catalyses GTP + succinate + CoA = succinyl-CoA + GDP + phosphate. The protein operates within carbohydrate metabolism; tricarboxylic acid cycle; succinate from succinyl-CoA (ligase route): step 1/1. Functionally, succinyl-CoA synthetase functions in the citric acid cycle (TCA), coupling the hydrolysis of succinyl-CoA to the synthesis of either ATP or GTP and thus represents the only step of substrate-level phosphorylation in the TCA. The beta subunit provides nucleotide specificity of the enzyme and binds the substrate succinate, while the binding sites for coenzyme A and phosphate are found in the alpha subunit. This Chlorobium chlorochromatii (strain CaD3) protein is Succinate--CoA ligase [ADP-forming] subunit beta.